The chain runs to 172 residues: Protein GrpE (172 aa).

The tract at residues 1–23 (MNQDHPECDSEELTQNSPETDPL) is disordered.

The protein belongs to the GrpE family. In terms of assembly, homodimer.

Its subcellular location is the cytoplasm. Its function is as follows. Participates actively in the response to hyperosmotic and heat shock by preventing the aggregation of stress-denatured proteins, in association with DnaK and GrpE. It is the nucleotide exchange factor for DnaK and may function as a thermosensor. Unfolded proteins bind initially to DnaJ; upon interaction with the DnaJ-bound protein, DnaK hydrolyzes its bound ATP, resulting in the formation of a stable complex. GrpE releases ADP from DnaK; ATP binding to DnaK triggers the release of the substrate protein, thus completing the reaction cycle. Several rounds of ATP-dependent interactions between DnaJ, DnaK and GrpE are required for fully efficient folding. The polypeptide is Protein GrpE (Xylella fastidiosa (strain 9a5c)).